The chain runs to 257 residues: Imidazole glycerol phosphate synthase subunit HisF (257 aa).

Catalysis depends on residues Asp-11 and Asp-130.

The protein belongs to the HisA/HisF family. In terms of assembly, heterodimer of HisH and HisF.

It is found in the cytoplasm. It catalyses the reaction 5-[(5-phospho-1-deoxy-D-ribulos-1-ylimino)methylamino]-1-(5-phospho-beta-D-ribosyl)imidazole-4-carboxamide + L-glutamine = D-erythro-1-(imidazol-4-yl)glycerol 3-phosphate + 5-amino-1-(5-phospho-beta-D-ribosyl)imidazole-4-carboxamide + L-glutamate + H(+). Its pathway is amino-acid biosynthesis; L-histidine biosynthesis; L-histidine from 5-phospho-alpha-D-ribose 1-diphosphate: step 5/9. Functionally, IGPS catalyzes the conversion of PRFAR and glutamine to IGP, AICAR and glutamate. The HisF subunit catalyzes the cyclization activity that produces IGP and AICAR from PRFAR using the ammonia provided by the HisH subunit. The chain is Imidazole glycerol phosphate synthase subunit HisF from Afipia carboxidovorans (strain ATCC 49405 / DSM 1227 / KCTC 32145 / OM5) (Oligotropha carboxidovorans).